A 344-amino-acid chain; its full sequence is Membrane progestin receptor delta (344 aa).

Topologically, residues Met1–Asn51 are cytoplasmic. The chain crosses the membrane as a helical span at residues Ile52–Gly72. The Extracellular segment spans residues Pro73–Pro83. The chain crosses the membrane as a helical span at residues Leu84 to Phe104. The Cytoplasmic segment spans residues Ser105–His113. Residues Ile114–Tyr134 traverse the membrane as a helical segment. At Ala135–His147 the chain is on the extracellular side. A helical membrane pass occupies residues Leu148–Cys168. Residues Tyr169–Glu217 are Cytoplasmic-facing. The helical transmembrane segment at Ala218 to Ala238 threads the bilayer. The Extracellular segment spans residues Ser239–Gln258. Residues Leu259–Met279 form a helical membrane-spanning segment. Residues Gly280–Ala292 lie on the Cytoplasmic side of the membrane. A helical membrane pass occupies residues Leu293–Ile313. Over Ala314 to Gln344 the chain is Extracellular.

Belongs to the ADIPOR family. As to quaternary structure, homodimer. Brain specific. Highly expressed in the hypothalamus, also expressed in forebrain, amygdala, corpus callosum and spinal cord.

It localises to the cell membrane. Its function is as follows. Plasma membrane progesterone (P4) receptor coupled to G proteins. Seems to act through a G(s) mediated pathway. Involved in neurosteroid inhibition of apoptosis. May be involved in regulating rapid P4 signaling in the nervous system. Also binds dehydroepiandrosterone (DHEA), pregnanolone, pregnenolone and allopregnanolone. The chain is Membrane progestin receptor delta from Homo sapiens (Human).